We begin with the raw amino-acid sequence, 235 residues long: Large ribosomal subunit protein uL1 (235 aa).

It belongs to the universal ribosomal protein uL1 family. In terms of assembly, part of the 50S ribosomal subunit.

In terms of biological role, binds directly to 23S rRNA. The L1 stalk is quite mobile in the ribosome, and is involved in E site tRNA release. Functionally, protein L1 is also a translational repressor protein, it controls the translation of the L11 operon by binding to its mRNA. This is Large ribosomal subunit protein uL1 from Prochlorococcus marinus (strain MIT 9303).